A 321-amino-acid chain; its full sequence is N-acetyl-gamma-glutamyl-phosphate reductase (321 aa).

Residue cysteine 131 is part of the active site.

This sequence belongs to the NAGSA dehydrogenase family. Type 1 subfamily.

The protein resides in the cytoplasm. It catalyses the reaction N-acetyl-L-glutamate 5-semialdehyde + phosphate + NADP(+) = N-acetyl-L-glutamyl 5-phosphate + NADPH + H(+). It participates in amino-acid biosynthesis; L-arginine biosynthesis; N(2)-acetyl-L-ornithine from L-glutamate: step 3/4. In terms of biological role, catalyzes the NADPH-dependent reduction of N-acetyl-5-glutamyl phosphate to yield N-acetyl-L-glutamate 5-semialdehyde. This Christiangramia forsetii (strain DSM 17595 / CGMCC 1.15422 / KT0803) (Gramella forsetii) protein is N-acetyl-gamma-glutamyl-phosphate reductase.